Reading from the N-terminus, the 100-residue chain is Double-stranded DNA-binding protein (100 aa).

The DNA-binding element occupies 1-19 (MRKMMQREVTYTTAQLARM).

As to quaternary structure, homodimer. Homomultimer. Binds to double-stranded DNA giving rise to multimeric nucleoprotein complexes.

Its function is as follows. Histone-like nucleoprotein that binds to the viral dsDNA and responsible for wrapping and condensing the viral DNA about 4-fold. Forms a nucleoprotein complex in which the DNA adopts a right-handed toroidal conformation winding around a protein core. Binding specificity for the viral genome is based on supercoiling. The formation of the nucleoprotein complex at the genome ends, for which the binding affinity is highest, activates the initiation of viral DNA replication. The binding of p6 would recruit the complex formed by the TP and the DNA polymerase to the origin. Protein p6 is also involved in the early to late transcription switch. The protein is Double-stranded DNA-binding protein of Bacillus phage Nf (Bacteriophage Nf).